The sequence spans 149 residues: MGAFDYISSFCSYTYANAKTKRKPLQTVDIKVKMDCDGCERRVRNVVRRMKGVKSVEVNRKQSRITVNGHVDPNKVLKRVKSTGKKAEFWPYIPQHMVYYPFAPGMYDKRAPAGHIRNPTQSFPTANAPEENYVSLFSDDNVHAACSIM.

An HMA domain is found at 25-88; it reads LQTVDIKVKM…RVKSTGKKAE (64 aa). 2 residues coordinate a metal cation: Cys36 and Cys39. Cys146 is subject to Cysteine methyl ester. Cys146 carries S-farnesyl cysteine lipidation. A propeptide spans 147-149 (removed in mature form); the sequence is SIM.

It belongs to the HIPP family. As to quaternary structure, interacts with ZHD11/HB29. Expressed at low levels in leaves and sepals.

It is found in the membrane. Functionally, heavy-metal-binding protein. Binds cadmium. May be involved in cadmium transport and play a role in cadmium detoxification. This is Heavy metal-associated isoprenylated plant protein 21 from Arabidopsis thaliana (Mouse-ear cress).